Consider the following 234-residue polypeptide: Mitochondrial assembly of ribosomal large subunit protein 1 (234 aa).

Positions 63 to 88 (SEPGLEERAEGTVNEGRPESDAADHT) are disordered.

It belongs to the Iojap/RsfS family. Associates with the mitochondrial ribosome large subunit (39S) via interaction with MRPL12 and/or MRPL14. The interaction generates steric hindrance that is expected to prevent premature association of the 28S and 39S ribosomal subunits. Interacts with intermediates of the mitochondrial ribosome large subunit (mt-LSU) (recruits the mitochondrial ribosome and complex I assembly factor AltMIEF1 and NDUFAB1); regulates mitochondrial ribosomes assembly. Interacts with MRPL12 and MRPL14.

It localises to the mitochondrion matrix. Functionally, required for normal mitochondrial ribosome function and mitochondrial translation. May play a role in ribosome biogenesis by preventing premature association of the 28S and 39S ribosomal subunits. Interacts with mitochondrial ribosomal protein uL14m (MRPL14), probably blocking formation of intersubunit bridge B8, preventing association of the 28S and 39S ribosomal subunits. Addition to isolated mitochondrial ribosomal subunits partially inhibits translation, probably by interfering with the association of the 28S and 39S ribosomal subunits and the formation of functional ribosomes. May also participate in the assembly and/or regulation of the stability of the large subunit of the mitochondrial ribosome. May function as a ribosomal silencing factor. This Homo sapiens (Human) protein is Mitochondrial assembly of ribosomal large subunit protein 1 (MALSU1).